The primary structure comprises 322 residues: Acetylglutamate kinase (322 aa).

Substrate-binding positions include 89 to 90 (GG), Arg111, and Asn217.

This sequence belongs to the acetylglutamate kinase family. ArgB subfamily.

It is found in the cytoplasm. It catalyses the reaction N-acetyl-L-glutamate + ATP = N-acetyl-L-glutamyl 5-phosphate + ADP. It participates in amino-acid biosynthesis; L-arginine biosynthesis; N(2)-acetyl-L-ornithine from L-glutamate: step 2/4. Functionally, catalyzes the ATP-dependent phosphorylation of N-acetyl-L-glutamate. The polypeptide is Acetylglutamate kinase (Ehrlichia ruminantium (strain Gardel)).